Consider the following 287-residue polypeptide: ATP synthase gamma chain (287 aa).

It belongs to the ATPase gamma chain family. F-type ATPases have 2 components, CF(1) - the catalytic core - and CF(0) - the membrane proton channel. CF(1) has five subunits: alpha(3), beta(3), gamma(1), delta(1), epsilon(1). CF(0) has three main subunits: a, b and c.

The protein localises to the cell inner membrane. Produces ATP from ADP in the presence of a proton gradient across the membrane. The gamma chain is believed to be important in regulating ATPase activity and the flow of protons through the CF(0) complex. In Serratia proteamaculans (strain 568), this protein is ATP synthase gamma chain.